The primary structure comprises 216 residues: CRIB domain-containing protein RIC7 (216 aa).

The region spanning 36 to 49 (IGNPTDVKHVAHIG) is the CRIB domain. Positions 52–216 (GPSDNATAPS…PQFEDDRNGF (165 aa)) are disordered. The segment covering 108 to 121 (SSSEKGSPTKERSD) has biased composition (basic and acidic residues).

In terms of assembly, interacts with ARAC4/ROP2 and ARAC11/ROP1. Expressed in roots, leaves, guard cells, stems, flowers, siliques and pollen.

It localises to the nucleus. Its subcellular location is the cytoplasm. The protein localises to the cell membrane. Its function is as follows. Functions as a downstream effector of Rho-related GTP binding proteins of the 'Rho of Plants' (ROPs) family. Participates in the propagation of ROP GTPase signals in specific cellular responses. Functions as a downstream effector of active ARAC4/ROP2 GTPase which is involved in the prevention of excessive stomatal opening upon light stimulation. Is involved in pollen tube growth regulation through its interaction with ARAC11/ROP1. The protein is CRIB domain-containing protein RIC7 (RIC7) of Arabidopsis thaliana (Mouse-ear cress).